The chain runs to 427 residues: MGPRWLLLWAAGLGLCSPLVSARTRGPRPGTDPTNGTLGPRSFFLRNSNDGYEQIPLPEDEDSSEGEFTEDRLSSGNRSSPPQKSPPGFISKSASGYLTSAWLTVFIPSVYTGVFLVSLPLNIMAVVVFVLKMKVKKPAVVYMLHLAAADVLFVCVLPFKISYYFSGSDWRFGSAMCRFVTAAFYGNMYASIMLMTAISVDRFLAVVYPIQSLSWRTLGRASFICLAIWAMAIAGVAPLLLQEQATQVPGLNITACHDVLNQTLLEGYYSYYFSAFSAVFFFVPLTLSTVSYVSIIRCLSSSTVANQNKKSRALLLSAAVFCIFILCFGPTNILLLLHYAFLSSDPMTEAAYFAYLLCVCVSSISCCIDPLIYYYASSECQRHLFAILHCKESSDPGSCNSSGQLMPSKMDTCSSNLSSSLYKKLLT.

The N-terminal stretch at 1-21 is a signal peptide; that stretch reads MGPRWLLLWAAGLGLCSPLVS. Residues 22 to 41 constitute a propeptide, removed for receptor activation; it reads ARTRGPRPGTDPTNGTLGPR. Residues 23–87 form a disordered region; the sequence is RTRGPRPGTD…RSSPPQKSPP (65 aa). Asn35 carries N-linked (GlcNAc...) asparagine glycosylation. Residues 42 to 104 lie on the Extracellular side of the membrane; it reads SFFLRNSNDG…SGYLTSAWLT (63 aa). The span at 58 to 68 shows a compositional bias: acidic residues; sequence PEDEDSSEGEF. Asn77 carries N-linked (GlcNAc...) asparagine glycosylation. A helical membrane pass occupies residues 105 to 130; that stretch reads VFIPSVYTGVFLVSLPLNIMAVVVFV. Residues 131–139 are Cytoplasmic-facing; it reads LKMKVKKPA. Residues 140 to 159 form a helical membrane-spanning segment; the sequence is VVYMLHLAAADVLFVCVLPF. At 160–178 the chain is on the extracellular side; the sequence is KISYYFSGSDWRFGSAMCR. A disulfide bridge connects residues Cys177 and Cys256. A helical membrane pass occupies residues 179–200; sequence FVTAAFYGNMYASIMLMTAISV. The Cytoplasmic portion of the chain corresponds to 201–220; it reads DRFLAVVYPIQSLSWRTLGR. A helical membrane pass occupies residues 221–241; it reads ASFICLAIWAMAIAGVAPLLL. The Extracellular segment spans residues 242–270; sequence QEQATQVPGLNITACHDVLNQTLLEGYYS. Asn252 and Asn261 each carry an N-linked (GlcNAc...) asparagine glycan. Residues 271–290 form a helical membrane-spanning segment; the sequence is YYFSAFSAVFFFVPLTLSTV. Residues 291 to 313 lie on the Cytoplasmic side of the membrane; sequence SYVSIIRCLSSSTVANQNKKSRA. Residues 314-336 traverse the membrane as a helical segment; it reads LLLSAAVFCIFILCFGPTNILLL. The Extracellular portion of the chain corresponds to 337–351; it reads LHYAFLSSDPMTEAA. The helical transmembrane segment at 352–376 threads the bilayer; sequence YFAYLLCVCVSSISCCIDPLIYYYA. At 377–427 the chain is on the cytoplasmic side; the sequence is SSECQRHLFAILHCKESSDPGSCNSSGQLMPSKMDTCSSNLSSSLYKKLLT. Ser420 is subject to Phosphoserine.

This sequence belongs to the G-protein coupled receptor 1 family. Proteolytic cleavage by thrombin generates a new N-terminus that functions as a tethered ligand. Also proteolytically cleaved by cathepsin CTSG. In terms of processing, phosphorylated in the C-terminal tail; probably mediating desensitization prior to the uncoupling and internalization of the receptor.

The protein resides in the cell membrane. High affinity receptor that binds the activated thrombin, leading to calcium release from intracellular stores. The thrombin-activated receptor signaling pathway is mediated through PTX-insensitive G proteins, activation of phospholipase C resulting in the production of 1D-myo-inositol 1,4,5-trisphosphate (InsP3) which binds to InsP3 receptors causing calcium release from the stores. In astrocytes, the calcium released into the cytosol allows the Ca(2+)-dependent release of L-glutamate into the synaptic cleft through BEST1, that targets the neuronal postsynaptic GRIN2A/NMDAR receptor resulting in the synaptic plasticity regulation. May play a role in platelets activation and in vascular development. Mediates up-regulation of pro-inflammatory cytokines, such as MCP-1/CCL2 and IL6, triggered by coagulation factor Xa (F10) in cardiac fibroblasts and umbilical vein endothelial cells. The protein is Proteinase-activated receptor 1 of Bos taurus (Bovine).